The sequence spans 346 residues: Nitrilase 3 (346 aa).

N-acetylserine is present on serine 2. The CN hydrolase domain occupies 25–297 (VRVTIVQSST…EGLVTADLDL (273 aa)). Glutamate 65 serves as the catalytic Proton acceptor. Lysine 152 (proton donor) is an active-site residue. Catalysis depends on cysteine 186, which acts as the Nucleophile.

This sequence belongs to the carbon-nitrogen hydrolase superfamily. Nitrilase family.

It is found in the cell membrane. The catalysed reaction is a nitrile + 2 H2O = a carboxylate + NH4(+). Its function is as follows. Can convert indole-3-acetonitrile to the plant hormone indole-3-acetic acid. In Arabidopsis thaliana (Mouse-ear cress), this protein is Nitrilase 3 (NIT3).